We begin with the raw amino-acid sequence, 496 residues long: 4-O-methyl-glucuronoyl methylesterase 1 (496 aa).

A signal peptide spans 1-19; it reads MKSTVASALLVLAGTAVQA. Residues 20-55 form the CBM1 domain; sequence QSGPWQQCGGIGWQGPFTCVSGHTCQVLNDWYHQCV. The tract at residues 57–151 is disordered; the sequence is GGGPSPPPTS…RLPDPFTFHN (95 aa). Residues 59–125 are compositionally biased toward pro residues; it reads GPSPPPTSPP…SPPPTSPPPS (67 aa). 3 disulfide bridges follow: Cys129/Cys163, Cys307/Cys443, and Cys339/Cys415. Positions 306-311 match the GXSYXG catalytic site motif motif; that stretch reads GCSRNG. Ser308 (nucleophile) is an active-site residue. Residues Lys312, Gln354, Glu362, and Trp406 each contribute to the substrate site. Catalysis depends on His442, which acts as the Proton donor/acceptor.

The protein belongs to the carbohydrate esterase 15 (CE15) family.

The protein resides in the secreted. The catalysed reaction is a 4-O-methyl-alpha-D-glucuronosyl ester derivative + H2O = 4-O-methyl-alpha-D-glucuronate derivative + an alcohol + H(+). Functionally, glucuronoyl esterase which may play a significant role in biomass degradation, as it is considered to disconnect hemicellulose from lignin through the hydrolysis of the ester bond between 4-O-methyl-D-glucuronic acid residues of glucuronoxylans and aromatic alcohols of lignin. Cleaves native lignin-carbohydrate (LC) ester bonds from LC complex preparations of spruce (softwood) and birch (hardwood), containing mainly hemicelluloses with partially acetylated glucomannans in spruce and partially acetylated xylan in birch. Can hydrolyze benzyl glucuronic acid (BnGlcA), allyl glucuronic acid (allylGlcA) and to a lower degree methyl glucuronic acid (MeGlcA) in vitro. In Sodiomyces alcalophilus (Acremonium alcalophilum), this protein is 4-O-methyl-glucuronoyl methylesterase 1.